The primary structure comprises 203 residues: Serine hydrolase-like protein (203 aa).

In terms of domain architecture, AB hydrolase-1 spans 33 to 145 (PPVLCLHGWL…FLLESDEMEN (113 aa)). The active site involves serine 108.

This sequence belongs to the AB hydrolase superfamily.

In terms of biological role, putative serine hydrolase. This is Serine hydrolase-like protein (SERHL) from Homo sapiens (Human).